The sequence spans 243 residues: HTH-type transcriptional regulator MlrA (243 aa).

The HTH merR-type domain occupies 3–72; that stretch reads LYTIGEVALL…VSKVKVLLSS (70 aa). A DNA-binding region (H-T-H motif) is located at residues 6–25; sequence IGEVALLCDINPVTLRAWQR.

Transcriptional activator of csgD, which is required for production of the curli (AgF). The polypeptide is HTH-type transcriptional regulator MlrA (Salmonella typhimurium (strain SL1344)).